Here is a 288-residue protein sequence, read N- to C-terminus: Small ribosomal subunit protein uS2 (288 aa).

It belongs to the universal ribosomal protein uS2 family. As to quaternary structure, component of the small ribosomal subunit. Mature ribosomes consist of a small (40S) and a large (60S) subunit. The 40S subunit contains about 33 different proteins and 1 molecule of RNA (18S). The 60S subunit contains about 49 different proteins and 3 molecules of RNA (28S, 5.8S and 5S). Interacts with ribosomal protein S21.

It is found in the cytoplasm. Required for the assembly and/or stability of the 40S ribosomal subunit. Required for the processing of the 20S rRNA-precursor to mature 18S rRNA in a late step of the maturation of 40S ribosomal subunits. This is Small ribosomal subunit protein uS2 from Aedes aegypti (Yellowfever mosquito).